Here is a 142-residue protein sequence, read N- to C-terminus: Putative pterin-4-alpha-carbinolamine dehydratase (142 aa).

This sequence belongs to the pterin-4-alpha-carbinolamine dehydratase family.

The catalysed reaction is (4aS,6R)-4a-hydroxy-L-erythro-5,6,7,8-tetrahydrobiopterin = (6R)-L-erythro-6,7-dihydrobiopterin + H2O. This Caenorhabditis elegans protein is Putative pterin-4-alpha-carbinolamine dehydratase (pcbd-1).